A 152-amino-acid chain; its full sequence is D-aminoacyl-tRNA deacylase (152 aa).

The Gly-cisPro motif, important for rejection of L-amino acids signature appears at 142–143 (GP).

The protein belongs to the DTD family. In terms of assembly, homodimer.

The protein localises to the cytoplasm. The catalysed reaction is glycyl-tRNA(Ala) + H2O = tRNA(Ala) + glycine + H(+). The enzyme catalyses a D-aminoacyl-tRNA + H2O = a tRNA + a D-alpha-amino acid + H(+). Its function is as follows. An aminoacyl-tRNA editing enzyme that deacylates mischarged D-aminoacyl-tRNAs. Also deacylates mischarged glycyl-tRNA(Ala), protecting cells against glycine mischarging by AlaRS. Acts via tRNA-based rather than protein-based catalysis; rejects L-amino acids rather than detecting D-amino acids in the active site. By recycling D-aminoacyl-tRNA to D-amino acids and free tRNA molecules, this enzyme counteracts the toxicity associated with the formation of D-aminoacyl-tRNA entities in vivo and helps enforce protein L-homochirality. This chain is D-aminoacyl-tRNA deacylase, found in Burkholderia multivorans (strain ATCC 17616 / 249).